Reading from the N-terminus, the 504-residue chain is Hexokinase-10 (504 aa).

Residues 7 to 29 traverse the membrane as a helical segment; sequence GWVRVAAVGWAVAACAVAAGMVA. One can recognise a Hexokinase domain in the interval 39 to 493; that stretch reads NRAVAVVRDL…SGTGAALLAA (455 aa). The hexokinase small subdomain stretch occupies residues 94–226; the sequence is DGSEEGISYA…GLNMKVNVLV (133 aa). ADP-binding residues include G108 and T109. D-glucose is bound by residues T192, K193, N227, N254, E282, and E313. Residues 227 to 482 are hexokinase large subdomain; sequence NNTVGTLALG…ATVSLRVMEE (256 aa). G447 lines the ADP pocket.

This sequence belongs to the hexokinase family. In terms of tissue distribution, expressed specifically in stamen.

It is found in the plastid. The protein resides in the chloroplast outer membrane. The enzyme catalyses a D-hexose + ATP = a D-hexose 6-phosphate + ADP + H(+). It carries out the reaction D-fructose + ATP = D-fructose 6-phosphate + ADP + H(+). The catalysed reaction is D-glucose + ATP = D-glucose 6-phosphate + ADP + H(+). It participates in carbohydrate metabolism; hexose metabolism. Its pathway is carbohydrate degradation; glycolysis; D-glyceraldehyde 3-phosphate and glycerone phosphate from D-glucose: step 1/4. Its function is as follows. Fructose and glucose phosphorylating enzyme. The polypeptide is Hexokinase-10 (HXK10) (Oryza sativa subsp. japonica (Rice)).